The following is a 101-amino-acid chain: Acylphosphatase-1 (101 aa).

Ser2 is modified (N-acetylserine). At Ser2 the chain carries N-acetylalanine. The Acylphosphatase-like domain maps to 11 to 101 (SVDYEVFGKV…LDYSDFQIVK (91 aa)). Catalysis depends on residues Arg26 and Asn44.

This sequence belongs to the acylphosphatase family. In terms of tissue distribution, organ-common type isozyme is found in many different tissues.

It catalyses the reaction an acyl phosphate + H2O = a carboxylate + phosphate + H(+). This Sus scrofa (Pig) protein is Acylphosphatase-1 (ACYP1).